We begin with the raw amino-acid sequence, 223 residues long: Serum amyloid P-component (223 aa).

The signal sequence occupies residues 1 to 19 (MNKPLLWISVLTSLLEAFA). The 200-residue stretch at 24 to 223 (SGKVFVFPRE…YVIIKPLVWV (200 aa)) folds into the Pentraxin (PTX) domain. N51 carries an N-linked (GlcNAc...) asparagine glycan. A disulfide bridge links C55 with C114. Residues D77, N78, E155, Q156, D157, and Q167 each coordinate Ca(2+).

It belongs to the pentraxin family. Homopentamer. Pentraxin (or pentaxin) have a discoid arrangement of 5 non-covalently bound subunits. It depends on Ca(2+) as a cofactor. N-glycosylated with a complex biantennary oligosaccharide chain with a sialic acid at the end (disialo-SAP). Monosialo-SAP as well as asioalo-SAP are also detected. Found in serum and urine.

It is found in the secreted. Its function is as follows. Can interact with DNA and histones and may scavenge nuclear material released from damaged circulating cells. May also function as a calcium-dependent lectin. The polypeptide is Serum amyloid P-component (APCS) (Homo sapiens (Human)).